Reading from the N-terminus, the 173-residue chain is Protein FAM180A (173 aa).

An N-terminal signal peptide occupies residues 1-17; it reads MHWKMLLLLLLYYNAEA.

The protein belongs to the FAM180 family.

The protein resides in the secreted. The polypeptide is Protein FAM180A (FAM180A) (Homo sapiens (Human)).